Consider the following 155-residue polypeptide: Transcription antitermination protein NusB (155 aa).

Belongs to the NusB family.

In terms of biological role, involved in transcription antitermination. Required for transcription of ribosomal RNA (rRNA) genes. Binds specifically to the boxA antiterminator sequence of the ribosomal RNA (rrn) operons. The polypeptide is Transcription antitermination protein NusB (Vibrio parahaemolyticus serotype O3:K6 (strain RIMD 2210633)).